The primary structure comprises 122 residues: Ribosome-binding factor A (122 aa).

Belongs to the RbfA family. As to quaternary structure, monomer. Binds 30S ribosomal subunits, but not 50S ribosomal subunits or 70S ribosomes.

It is found in the cytoplasm. Its function is as follows. One of several proteins that assist in the late maturation steps of the functional core of the 30S ribosomal subunit. Associates with free 30S ribosomal subunits (but not with 30S subunits that are part of 70S ribosomes or polysomes). Required for efficient processing of 16S rRNA. May interact with the 5'-terminal helix region of 16S rRNA. The protein is Ribosome-binding factor A of Moorella thermoacetica (strain ATCC 39073 / JCM 9320).